The chain runs to 206 residues: Translation initiation factor IF-3 (206 aa).

Belongs to the IF-3 family. In terms of assembly, monomer.

It is found in the cytoplasm. Its function is as follows. IF-3 binds to the 30S ribosomal subunit and shifts the equilibrium between 70S ribosomes and their 50S and 30S subunits in favor of the free subunits, thus enhancing the availability of 30S subunits on which protein synthesis initiation begins. This Shigella flexneri protein is Translation initiation factor IF-3.